The chain runs to 232 residues: uncharacterized protein (232 aa).

This is an uncharacterized protein from Thermoproteus tenax (TTV1).